The sequence spans 433 residues: Type I acyl-CoA thioesterase mpaH (433 aa).

Residues 58-246 form an abhydrolase domain region; sequence HGVGLPKELY…IKARFGTTAD (189 aa). Val-60 lines the substrate pocket. Ser-139 acts as the Nucleophile in catalysis. Substrate is bound at residue Phe-140. Residues Asp-163 and His-365 contribute to the active site.

The protein belongs to the AB hydrolase superfamily. MpaH hydrolase family. In terms of assembly, homodimer.

The protein resides in the peroxisome matrix. It catalyses the reaction mycophenolyl-CoA + H2O = mycophenolate + CoA + H(+). Its pathway is secondary metabolite biosynthesis; terpenoid biosynthesis. In terms of biological role, type I acyl-CoA thioesterase; part of the gene cluster that mediates the biosynthesis of mycophenolic acid (MPA), the first isolated antibiotic natural product in the world obtained from a culture of Penicillium brevicompactum in 1893. MpaH acts as a peroxisomal acyl-CoA hydrolase that converts MPA-CoA into the final product MPA. The first step of the pathway is the synthesis of 5-methylorsellinic acid (5MOA) by the cytosolic polyketide synthase mpaC. 5MOA is then converted to the phthalide compound 5,7-dihydroxy-4,6-dimethylphthalide (DHMP) by the endoplasmic reticulum-bound cytochrome P450 monooxygenase mpaDE. MpaDE first catalyzes hydroxylation of 5-MOA to 4,6-dihydroxy-2-(hydroxymethyl)-3-methylbenzoic acid (DHMB). MpaDE then acts as a lactone synthase that catalyzes the ring closure to convert DHMB into DHMP. The next step is the prenylation of DHMP by the Golgi apparatus-associated prenyltransferase mpaA to yield farnesyl-DHMP (FDHMP). The ER-bound oxygenase mpaB then mediates the oxidative cleavage the C19-C20 double bond in FDHMP to yield FDHMP-3C via a mycophenolic aldehyde intermediate. The O-methyltransferase mpaG catalyzes the methylation of FDHMP-3C to yield MFDHMP-3C. After the cytosolic methylation of FDHMP-3C, MFDHMP-3C enters into peroxisomes probably via free diffusion due to its low molecular weight. Upon a peroxisomal CoA ligation reaction, catalyzed by a beta-oxidation component enzyme acyl-CoA ligase ACL891, MFDHMP-3C-CoA would then be restricted to peroxisomes for the following beta-oxidation pathway steps. The peroxisomal beta-oxidation machinery than converts MFDHMP-3C-CoA into MPA_CoA, via a beta-oxidation chain-shortening process. Finally mpaH acts as a peroxisomal acyl-CoA hydrolase with high substrate specificity toward MPA-CoA to release the final product MPA. This chain is Type I acyl-CoA thioesterase mpaH, found in Penicillium brevicompactum.